The chain runs to 170 residues: ATP synthase subunit b (170 aa).

Residues 15–37 (GDILFQLLAMLILLALLKKYALG) traverse the membrane as a helical segment.

The protein belongs to the ATPase B chain family. In terms of assembly, F-type ATPases have 2 components, F(1) - the catalytic core - and F(0) - the membrane proton channel. F(1) has five subunits: alpha(3), beta(3), gamma(1), delta(1), epsilon(1). F(0) has three main subunits: a(1), b(2) and c(10-14). The alpha and beta chains form an alternating ring which encloses part of the gamma chain. F(1) is attached to F(0) by a central stalk formed by the gamma and epsilon chains, while a peripheral stalk is formed by the delta and b chains. The F(1)F(0) complex interacts with SpoIIIJ and YqjG; YqgA is found in the same complex.

The protein localises to the cell membrane. Its function is as follows. F(1)F(0) ATP synthase produces ATP from ADP in the presence of a proton or sodium gradient. F-type ATPases consist of two structural domains, F(1) containing the extramembraneous catalytic core and F(0) containing the membrane proton channel, linked together by a central stalk and a peripheral stalk. During catalysis, ATP synthesis in the catalytic domain of F(1) is coupled via a rotary mechanism of the central stalk subunits to proton translocation. Functionally, component of the F(0) channel, it forms part of the peripheral stalk, linking F(1) to F(0). This is ATP synthase subunit b from Bacillus subtilis (strain 168).